The chain runs to 42 residues: Thymosin beta-10 (42 aa).

Basic and acidic residues-rich tracts occupy residues 1 to 25 (MADKPDLGEINSFDKAKLKKTETQE) and 33 to 42 (ETIEQEKQAK). Residues 1 to 42 (MADKPDLGEINSFDKAKLKKTETQEKNTLPTKETIEQEKQAK) are disordered. Ala2 is modified (N-acetylalanine). Lys4 is modified (N6-acetyllysine). Position 12 is a phosphoserine (Ser12). Position 15 is an N6-acetyllysine (Lys15). Residues Thr21, Thr23, and Thr34 each carry the phosphothreonine modification. Lys39 carries the N6-acetyllysine modification.

It belongs to the thymosin beta family. In terms of tissue distribution, distributed in numerous types of tissues, including thymus, spleen, lung, liver and muscle.

Its subcellular location is the cytoplasm. The protein resides in the cytoskeleton. Its function is as follows. Plays an important role in the organization of the cytoskeleton. Binds to and sequesters actin monomers (G actin) and therefore inhibits actin polymerization. This is Thymosin beta-10 (TMSB10) from Bos taurus (Bovine).